The following is a 172-amino-acid chain: Large ribosomal subunit protein uL10 (172 aa).

It belongs to the universal ribosomal protein uL10 family. Part of the ribosomal stalk of the 50S ribosomal subunit. The N-terminus interacts with L11 and the large rRNA to form the base of the stalk. The C-terminus forms an elongated spine to which L12 dimers bind in a sequential fashion forming a multimeric L10(L12)X complex.

Functionally, forms part of the ribosomal stalk, playing a central role in the interaction of the ribosome with GTP-bound translation factors. The sequence is that of Large ribosomal subunit protein uL10 from Rhizobium etli (strain CIAT 652).